A 177-amino-acid polypeptide reads, in one-letter code: Putative thioredoxin peroxidase (177 aa).

The Thioredoxin domain occupies Met-1–Phe-158. The active-site Cysteine sulfenic acid (-SOH) intermediate is Cys-45.

The protein belongs to the peroxiredoxin family. AhpC/Prx1 subfamily. As to quaternary structure, homodimer; disulfide-linked, upon oxidation.

The enzyme catalyses a hydroperoxide + [thioredoxin]-dithiol = an alcohol + [thioredoxin]-disulfide + H2O. Functionally, thiol-specific peroxidase that catalyzes the reduction of hydrogen peroxide and organic hydroperoxides to water and alcohols, respectively. Plays a role in cell protection against oxidative stress by detoxifying peroxides and as sensor of hydrogen peroxide-mediated signaling events. In Encephalitozoon cuniculi (strain GB-M1) (Microsporidian parasite), this protein is Putative thioredoxin peroxidase.